Here is a 539-residue protein sequence, read N- to C-terminus: Sorting nexin-27 (539 aa).

A disordered region spans residues 1 to 40 (MADEDGEGIHPSAPHRNGGGGGGSGLHCAGNGGGGGGGPR). Over residues 17-39 (NGGGGGGSGLHCAGNGGGGGGGP) the composition is skewed to gly residues. A PDZ domain is found at 41–134 (VVRIVKSESG…ELILTVLSVP (94 aa)). Residues Ser-49 and Ser-60 each carry the phosphoserine modification. The region spanning 159 to 267 (QAVPISVPTY…EFLSESDENY (109 aa)) is the PX domain. In terms of domain architecture, Ras-associating spans 271–360 (SDVELRVALP…TCLTIRKWLF (90 aa)). The segment at 271-360 (SDVELRVALP…TCLTIRKWLF (90 aa)) is FERM-like region F1. The interval 371–419 (NDLAVTYFFHQAVDDVKKGYIKAEEKSYQLQKLHEQRKMVMYLNMLRTC) is FERM-like region F2. Residues 423 to 523 (NEIIFPHCAC…RVFCELKWRK (101 aa)) form an FERM-like region F3 region.

In terms of assembly, core component of the SNX27-retromer, a multiprotein complex composed of SNX27, the WASH complex and the retromer complex. Interacts (via the FERM-like regions) with the WASH complex. Interacts with SNX1. Interacts with CYTIP. Interacts with DGKZ. Interacts with MCC. Interacts (via PDZ domain) with a number of target transmembrane proteins (via PDZ-binding motif): ABCC4, ADRB2, ARHGEF7, GRIA1, GRIA2, GRIN1, GRIN2A GRIN2C, KCNJ6, KCNJ9 and SLC2A1/GLUT1. Interacts (via PDZ domains) with SLC9A3; directs SLC9A3 membrane insertion from early endosomes to the plasma membrane. In terms of tissue distribution, expressed in cells of hematopoietic origin.

The protein localises to the early endosome membrane. The protein resides in the cytoplasm. Its subcellular location is the cytosol. In terms of biological role, involved in the retrograde transport from endosome to plasma membrane, a trafficking pathway that promotes the recycling of internalized transmembrane proteins. Following internalization, endocytosed transmembrane proteins are delivered to early endosomes and recycled to the plasma membrane instead of being degraded in lysosomes. SNX27 specifically binds and directs sorting of a subset of transmembrane proteins containing a PDZ-binding motif at the C-terminus: following interaction with target transmembrane proteins, associates with the retromer complex, preventing entry into the lysosomal pathway, and promotes retromer-tubule based plasma membrane recycling. SNX27 also binds with the WASH complex. Interacts with membranes containing phosphatidylinositol-3-phosphate (PtdIns(3P)). May participate in establishment of natural killer cell polarity. Recruits CYTIP to early endosomes. This Mus musculus (Mouse) protein is Sorting nexin-27 (Snx27).